The following is a 273-amino-acid chain: Dermonecrotic toxin LspaSicTox-alphaIA2i (273 aa).

Histidine 5 is a catalytic residue. Mg(2+) is bound by residues glutamate 25 and aspartate 27. Histidine 41 acts as the Nucleophile in catalysis. Disulfide bonds link cysteine 45/cysteine 51 and cysteine 47/cysteine 190. Aspartate 85 provides a ligand contact to Mg(2+).

It belongs to the arthropod phospholipase D family. Class II subfamily. Mg(2+) serves as cofactor. Expressed by the venom gland.

The protein resides in the secreted. It catalyses the reaction an N-(acyl)-sphingosylphosphocholine = an N-(acyl)-sphingosyl-1,3-cyclic phosphate + choline. The catalysed reaction is an N-(acyl)-sphingosylphosphoethanolamine = an N-(acyl)-sphingosyl-1,3-cyclic phosphate + ethanolamine. The enzyme catalyses a 1-acyl-sn-glycero-3-phosphocholine = a 1-acyl-sn-glycero-2,3-cyclic phosphate + choline. It carries out the reaction a 1-acyl-sn-glycero-3-phosphoethanolamine = a 1-acyl-sn-glycero-2,3-cyclic phosphate + ethanolamine. Dermonecrotic toxins cleave the phosphodiester linkage between the phosphate and headgroup of certain phospholipids (sphingolipid and lysolipid substrates), forming an alcohol (often choline) and a cyclic phosphate. This toxin acts on sphingomyelin (SM). It may also act on ceramide phosphoethanolamine (CPE), lysophosphatidylcholine (LPC) and lysophosphatidylethanolamine (LPE), but not on lysophosphatidylserine (LPS), and lysophosphatidylglycerol (LPG). It acts by transphosphatidylation, releasing exclusively cyclic phosphate products as second products. Induces dermonecrosis, hemolysis, increased vascular permeability, edema, inflammatory response, and platelet aggregation. The protein is Dermonecrotic toxin LspaSicTox-alphaIA2i of Loxosceles spadicea (Recluse spider).